We begin with the raw amino-acid sequence, 833 residues long: Toll-like receptor 4 (833 aa).

The N-terminal stretch at methionine 1–proline 23 is a signal peptide. An LRRNT domain is found at glutamate 24 to serine 54. Residues glutamate 24–lysine 632 are Extracellular-facing. Residues cysteine 29 and cysteine 40 are joined by a disulfide bond. The N-linked (GlcNAc...) asparagine glycan is linked to asparagine 35. 5 LRR repeats span residues serine 55–asparagine 76, glutamate 79–glycine 100, histidine 103–glycine 124, serine 127–histidine 148, and threonine 151–serine 172. The N-linked (GlcNAc...) asparagine glycan is linked to asparagine 173. LRR repeat units follow at residues asparagine 176–valine 197, asparagine 205–glutamate 225, and lysine 227–asparagine 236. Asparagine 205 carries an N-linked (GlcNAc...) asparagine glycan. Asparagine 238 carries an N-linked (GlcNAc...) asparagine glycan. Cysteine 281 and cysteine 306 are oxidised to a cystine. An N-linked (GlcNAc...) asparagine glycan is attached at asparagine 309. LRR repeat units follow at residues proline 352–glutamate 373, serine 374–arginine 394, arginine 400–glycine 420, glutamine 423–leucine 444, asparagine 448–tyrosine 456, serine 472–leucine 495, asparagine 497–serine 518, lysine 521–proline 542, and serine 545–arginine 565. Cysteine 390 and cysteine 391 form a disulfide bridge. Asparagine 497 and asparagine 526 each carry an N-linked (GlcNAc...) asparagine glycan. 2 N-linked (GlcNAc...) asparagine glycosylation sites follow: asparagine 570 and asparagine 575. Residues asparagine 579–valine 630 enclose the LRRCT domain. 2 cysteine pairs are disulfide-bonded: cysteine 583–cysteine 609 and cysteine 585–cysteine 628. Residue asparagine 625 is glycosylated (N-linked (GlcNAc...) asparagine). The helical transmembrane segment at threonine 633–tyrosine 653 threads the bilayer. At lysine 654 to serine 833 the chain is on the cytoplasmic side. Residues serine 673 to leucine 816 enclose the TIR domain.

The protein belongs to the Toll-like receptor family. In terms of assembly, belongs to the lipopolysaccharide (LPS) receptor, a multi-protein complex containing at least CD14, LY96 and TLR4. Binding to bacterial LPS leads to homodimerization. Interacts with LY96 via the extracellular domain. Interacts with MYD88 and TIRAP via their respective TIR domains. Interacts with TICAM2. Interacts with NOX4. Interacts with CNPY3 and HSP90B1; this interaction is required for proper folding in the endoplasmic reticulum. Interacts with MAP3K21; this interaction leads to negative regulation of TLR4 signaling. Interacts with CD36, following CD36 stimulation by oxLDL or amyloid-beta 42, and forms a heterodimer with TLR6. The trimeric complex is internalized and triggers inflammatory response. LYN kinase activity facilitates TLR4-TLR6 heterodimerization and signal initiation. Interacts with TICAM1 in response to LPS in a WDFY1-dependent manner. Interacts with WDFY1 in response to LPS. Interacts with SMPDL3B. Interacts with CEACAM1; upon lipopolysaccharide stimulation, forms a complex including TLR4 and the phosphorylated form of SYK and CEACAM1, which in turn, recruits PTPN6 that dephosphorylates SYK, reducing the production of reactive oxygen species (ROS) and lysosome disruption, which in turn, reduces the activity of the inflammasome. Interacts with RFTN1; the interaction occurs in response to lipopolysaccharide stimulation. Interacts with SCIMP; the interaction occurs in response to lipopolysaccharide stimulation and is enhanced by phosphorylation of SCIMP by LYN. This interaction facilitates the phosphorylation of TLR4 by LYN which elicits a selective cytokine response in macrophages. Interacts with TRAF3IP3. Interacts with TREM1; this interaction enhances TLR4-mediated inflammatory response. Interacts with ZG16B/PAUF. Interacts with CD82; this interaction inhibits TLR4-mediated signaling pathway. Post-translationally, phosphorylated on tyrosine residues by LYN after binding lipopolysaccharide. Ubiquitinated by RNF128 via 'Lys-28'-linked polyubiquitin chains, leading to proteasomal degradation.

Its subcellular location is the cell membrane. It is found in the early endosome. The protein resides in the cell projection. It localises to the ruffle. Transmembrane receptor that functions as a pattern recognition receptor recognizing pathogen- and damage-associated molecular patterns (PAMPs and DAMPs) to induce innate immune responses via downstream signaling pathways. At the plasma membrane, cooperates with LY96 to mediate the innate immune response to bacterial lipopolysaccharide (LPS). Also involved in LPS-independent inflammatory responses triggered by free fatty acids, such as palmitate, and Ni(2+). Mechanistically, acts via MYD88, TIRAP and TRAF6, leading to NF-kappa-B activation, cytokine secretion and the inflammatory response. Alternatively, CD14-mediated TLR4 internalization via endocytosis is associated with the initiation of a MYD88-independent signaling via the TICAM1-TBK1-IRF3 axis leading to type I interferon production. In addition to the secretion of proinflammatory cytokines, initiates the activation of NLRP3 inflammasome and formation of a positive feedback loop between autophagy and NF-kappa-B signaling cascade. In complex with TLR6, promotes inflammation in monocytes/macrophages by associating with TLR6 and the receptor CD86. Upon ligand binding, such as oxLDL or amyloid-beta 42, the TLR4:TLR6 complex is internalized and triggers inflammatory response, leading to NF-kappa-B-dependent production of CXCL1, CXCL2 and CCL9 cytokines, via MYD88 signaling pathway, and CCL5 cytokine, via TICAM1 signaling pathway. In myeloid dendritic cells, vesicular stomatitis virus glycoprotein G but not LPS promotes the activation of IRF7, leading to type I IFN production in a CD14-dependent manner. The chain is Toll-like receptor 4 (TLR4) from Felis catus (Cat).